The sequence spans 264 residues: E3 ubiquitin-protein ligase MARCHF8 (264 aa).

Residues 15–47 are disordered; it reads LGHSVSRSSNISKAGSPTSVSAPSRFPRTSVTP. Over residues 16 to 47 the composition is skewed to polar residues; the sequence is GHSVSRSSNISKAGSPTSVSAPSRFPRTSVTP. An RING-CH-type zinc finger spans residues 45-106; it reads VTPSSQDICR…ELCKFEFIME (62 aa). Cys53, Cys56, Cys70, Cys72, His80, Cys83, Cys96, and Cys99 together coordinate Zn(2+). Transmembrane regions (helical) follow at residues 130–150 and 170–190; these read CSVTFHVIAITCVVWSLYVLI and FWTKLVVVAIGFTGGLLFMYV.

Its subcellular location is the cytoplasmic vesicle membrane. It is found in the lysosome membrane. The protein localises to the early endosome membrane. It carries out the reaction S-ubiquitinyl-[E2 ubiquitin-conjugating enzyme]-L-cysteine + [acceptor protein]-L-lysine = [E2 ubiquitin-conjugating enzyme]-L-cysteine + N(6)-ubiquitinyl-[acceptor protein]-L-lysine.. It functions in the pathway protein modification; protein ubiquitination. In terms of biological role, E3 ubiquitin-protein ligase that mediates ubiquitination of cd86 and MHC class II proteins, such as hla-dr alpha and beta, and promotes their subsequent endocytosis and sorting to lysosomes via multivesicular bodies. In Xenopus laevis (African clawed frog), this protein is E3 ubiquitin-protein ligase MARCHF8 (marchf8).